Reading from the N-terminus, the 162-residue chain is Corticoliberin-1 (162 aa).

The signal sequence occupies residues 1–24; it reads MKLNFLVTTVALLVAFPPPYECRA. Positions 25–119 are excised as a propeptide; that stretch reads IDSSSNQPAT…ALDSEERERR (95 aa). A Phenylalanine amide modification is found at Phe-160.

Belongs to the sauvagine/corticotropin-releasing factor/urotensin I family.

It is found in the secreted. Functionally, this hormone from hypothalamus regulates the release of corticotropin from pituitary gland. This chain is Corticoliberin-1 (crf1), found in Catostomus commersonii (White sucker).